We begin with the raw amino-acid sequence, 98 residues long: Large ribosomal subunit protein uL23 (98 aa).

The protein belongs to the universal ribosomal protein uL23 family. In terms of assembly, part of the 50S ribosomal subunit. Contacts protein L29, and trigger factor when it is bound to the ribosome.

In terms of biological role, one of the early assembly proteins it binds 23S rRNA. One of the proteins that surrounds the polypeptide exit tunnel on the outside of the ribosome. Forms the main docking site for trigger factor binding to the ribosome. The polypeptide is Large ribosomal subunit protein uL23 (Borrelia garinii subsp. bavariensis (strain ATCC BAA-2496 / DSM 23469 / PBi) (Borreliella bavariensis)).